The chain runs to 258 residues: Snake venom serine protease 3 (258 aa).

A signal peptide spans 1–18 (MVLIRVLANLLILQLSYA). Positions 19-24 (QKSSEL) are excised as a propeptide. Residues 25–249 (VIGGDECNIN…YTDWIQSIIA (225 aa)) enclose the Peptidase S1 domain. 6 disulfides stabilise this stretch: cysteine 31–cysteine 163, cysteine 50–cysteine 66, cysteine 98–cysteine 256, cysteine 142–cysteine 210, cysteine 174–cysteine 189, and cysteine 200–cysteine 225. N-linked (GlcNAc...) asparagine glycosylation is present at asparagine 44. Histidine 65 (charge relay system) is an active-site residue. Asparagine 103 carries N-linked (GlcNAc...) asparagine glycosylation. Aspartate 110 functions as the Charge relay system in the catalytic mechanism. N-linked (GlcNAc...) asparagine glycans are attached at residues asparagine 117, asparagine 121, and asparagine 154. The active-site Charge relay system is the serine 204. The N-linked (GlcNAc...) asparagine glycan is linked to asparagine 251.

The protein belongs to the peptidase S1 family. Snake venom subfamily. In terms of assembly, monomer. As to expression, expressed by the venom gland.

It is found in the secreted. Its function is as follows. Snake venom serine protease that may act in the hemostasis system of the prey. The protein is Snake venom serine protease 3 (TLG3) of Craspedocephalus gramineus (Bamboo pit viper).